Here is a 526-residue protein sequence, read N- to C-terminus: Glucomannan 4-beta-mannosyltransferase 1 (526 aa).

A helical membrane pass occupies residues 31–51 (VIIPLLKLAVIVCSVMSIMLF). Asp-130 is an active-site residue. Asp-189 and Asp-191 together coordinate substrate. Asp-283 is an active-site residue. The next 4 membrane-spanning stretches (helical) occupy residues 362–382 (IVAHWVTFFFYCIVIPACVIV), 399–419 (ITILNAVSTPRSMHLLVLWIL), 477–497 (PLEIIVGMYMLHCATYDLLFG), and 501–521 (FFVYLLLQAGAFFTMGFGLVG).

It belongs to the glycosyltransferase 2 family. Plant cellulose synthase-like A subfamily.

The protein localises to the golgi apparatus membrane. The enzyme catalyses GDP-mannose + (glucomannan)n = GDP + (glucomannan)n+1.. In terms of biological role, possesses 4-beta-mannosyltransferase activity on mannan using GDP-mannose. The beta-1,4-mannan product is the backbone for galactomannan synthesis by galactomannan galactosyltransferase. The galactomannan is a hemicellulosic storage polysaccharide accumulated in the form of secondary wall thickenings in the seed endosperm. The chain is Glucomannan 4-beta-mannosyltransferase 1 from Cyamopsis tetragonoloba (Guar).